The following is a 147-amino-acid chain: Ribosomal RNA large subunit methyltransferase H (147 aa).

S-adenosyl-L-methionine is bound by residues leucine 66, glycine 95, and 114–119; that span reads LSELTF.

The protein belongs to the RNA methyltransferase RlmH family. Homodimer.

The protein localises to the cytoplasm. The enzyme catalyses pseudouridine(1915) in 23S rRNA + S-adenosyl-L-methionine = N(3)-methylpseudouridine(1915) in 23S rRNA + S-adenosyl-L-homocysteine + H(+). Functionally, specifically methylates the pseudouridine at position 1915 (m3Psi1915) in 23S rRNA. The chain is Ribosomal RNA large subunit methyltransferase H from Synechococcus sp. (strain RCC307).